Consider the following 654-residue polypeptide: APC membrane recruitment protein 2 (654 aa).

4 disordered regions span residues 1-105 (MEVQ…TAPL), 224-289 (ECGN…QSEQ), 316-369 (IIAD…PQVS), and 381-654 (PAHQ…QSRK). The segment covering 9 to 18 (EPPPCDPQPP) has biased composition (pro residues). A compositionally biased stretch (basic and acidic residues) spans 60 to 70 (ELVRSKTHDGL). Residues 427–454 (PQKDEDSPAPRRAEPVLHHAPARLEKRP) are compositionally biased toward basic and acidic residues. Positions 468–479 (SGSSKTGKQQPS) are enriched in polar residues. A compositionally biased stretch (low complexity) spans 565-575 (SPKCSSSATSS). Residues 576 to 586 (FRSMKGSTSLP) show a composition bias toward polar residues. Residues 601–621 (SHSSSQGALSSNLSPTSTTPP) are compositionally biased toward low complexity. The segment covering 644 to 654 (GKSTSTSQSRK) has biased composition (polar residues).

Belongs to the Amer family.

It is found in the cell membrane. Its function is as follows. Negative regulator of the canonical Wnt signaling pathway involved in neuroectodermal patterning. Acts by specifically binding phosphatidylinositol 4,5-bisphosphate (PtdIns(4,5)P2), translocating to the cell membrane and interacting with key regulators of the canonical Wnt signaling pathway, such as components of the beta-catenin destruction complex. This is APC membrane recruitment protein 2 (amer2) from Danio rerio (Zebrafish).